The chain runs to 115 residues: Ribonuclease P protein component (115 aa).

This sequence belongs to the RnpA family. Consists of a catalytic RNA component (M1 or rnpB) and a protein subunit.

It catalyses the reaction Endonucleolytic cleavage of RNA, removing 5'-extranucleotides from tRNA precursor.. In terms of biological role, RNaseP catalyzes the removal of the 5'-leader sequence from pre-tRNA to produce the mature 5'-terminus. It can also cleave other RNA substrates such as 4.5S RNA. The protein component plays an auxiliary but essential role in vivo by binding to the 5'-leader sequence and broadening the substrate specificity of the ribozyme. The chain is Ribonuclease P protein component from Macrococcus caseolyticus (strain JCSC5402) (Macrococcoides caseolyticum).